The following is a 429-amino-acid chain: MGTIKQIKAREILDSRGNPTVEADVILDSGVMGRAAVPSGASTGTREAVELRDGDAGRYLGKGVRKAVENVNTVIADALCGMDASGQRALDDRMRELDGTDNKGKLGANALLAVSLAAARATAAERGQSLFRYLNPEGPWSLPVPMMNILNGGEHADNSVDIQEFMVMPTGFDRFSEALRCGTEIFHALKKVLQDRGLNTGVGDEGGFAPDLPSNEAALEVILEAIDRAGYKAGENVWLALDAASSEFYQDGVYRLASEGREFSAEAFADYLADLCARYPILSIEDGMDESDWVGWKALTDKLGDRVQLVGDDLFVTNTRILKRGIDEGVGNSILIKFNQIGTLSETLDAIAMAHEAGFTSVVSHRSGETEDTTIADLAVATTATQIKTGSLSRSDRVAKYNQLLRIEEELGEQADYPGLAAFPQLRRG.

Gln163 serves as a coordination point for (2R)-2-phosphoglycerate. Residue Glu205 is the Proton donor of the active site. Asp242, Glu285, and Asp312 together coordinate Mg(2+). Positions 337, 366, 367, and 388 each coordinate (2R)-2-phosphoglycerate. The active-site Proton acceptor is the Lys337.

This sequence belongs to the enolase family. As to quaternary structure, component of the RNA degradosome, a multiprotein complex involved in RNA processing and mRNA degradation. It depends on Mg(2+) as a cofactor.

It is found in the cytoplasm. The protein localises to the secreted. The protein resides in the cell surface. The enzyme catalyses (2R)-2-phosphoglycerate = phosphoenolpyruvate + H2O. It participates in carbohydrate degradation; glycolysis; pyruvate from D-glyceraldehyde 3-phosphate: step 4/5. Functionally, catalyzes the reversible conversion of 2-phosphoglycerate (2-PG) into phosphoenolpyruvate (PEP). It is essential for the degradation of carbohydrates via glycolysis. The chain is Enolase from Alkalilimnicola ehrlichii (strain ATCC BAA-1101 / DSM 17681 / MLHE-1).